The following is a 21-amino-acid chain: Outer membrane protein A (21 aa).

The chain crosses the membrane as a beta stranded span at residues 6–16 (TWYTGAKLGWS).

Belongs to the outer membrane OOP (TC 1.B.6) superfamily. OmpA family. In terms of assembly, monomer and homodimer.

It localises to the cell outer membrane. In terms of biological role, with TolR probably plays a role in maintaining the position of the peptidoglycan cell wall in the periplasm. Acts as a porin with low permeability that allows slow penetration of small solutes; an internal gate slows down solute passage. This Actinobacillus lignieresii protein is Outer membrane protein A.